We begin with the raw amino-acid sequence, 68 residues long: Protein SlyX homolog (68 aa).

This sequence belongs to the SlyX family.

The polypeptide is Protein SlyX homolog (Pseudomonas syringae pv. tomato (strain ATCC BAA-871 / DC3000)).